The following is a 310-amino-acid chain: Methionyl-tRNA formyltransferase (310 aa).

108–111 (SLLP) is a binding site for (6S)-5,6,7,8-tetrahydrofolate.

The protein belongs to the Fmt family.

It carries out the reaction L-methionyl-tRNA(fMet) + (6R)-10-formyltetrahydrofolate = N-formyl-L-methionyl-tRNA(fMet) + (6S)-5,6,7,8-tetrahydrofolate + H(+). Attaches a formyl group to the free amino group of methionyl-tRNA(fMet). The formyl group appears to play a dual role in the initiator identity of N-formylmethionyl-tRNA by promoting its recognition by IF2 and preventing the misappropriation of this tRNA by the elongation apparatus. The polypeptide is Methionyl-tRNA formyltransferase (Fusobacterium nucleatum subsp. nucleatum (strain ATCC 25586 / DSM 15643 / BCRC 10681 / CIP 101130 / JCM 8532 / KCTC 2640 / LMG 13131 / VPI 4355)).